The following is a 202-amino-acid chain: Na(+)-translocating NADH-quinone reductase subunit E (202 aa).

A run of 6 helical transmembrane segments spans residues 5 to 25 (VSLF…FLGM), 35 to 55 (VSTA…TVPL), 81 to 101 (FLGL…LEMF), 114 to 134 (GVFL…LFMV), 144 to 164 (VVYG…LAGI), and 180 to 200 (LGIT…FGGM).

This sequence belongs to the NqrDE/RnfAE family. In terms of assembly, composed of six subunits; NqrA, NqrB, NqrC, NqrD, NqrE and NqrF.

The protein localises to the cell inner membrane. The enzyme catalyses a ubiquinone + n Na(+)(in) + NADH + H(+) = a ubiquinol + n Na(+)(out) + NAD(+). Functionally, NQR complex catalyzes the reduction of ubiquinone-1 to ubiquinol by two successive reactions, coupled with the transport of Na(+) ions from the cytoplasm to the periplasm. NqrA to NqrE are probably involved in the second step, the conversion of ubisemiquinone to ubiquinol. This is Na(+)-translocating NADH-quinone reductase subunit E from Psychrobacter arcticus (strain DSM 17307 / VKM B-2377 / 273-4).